We begin with the raw amino-acid sequence, 1027 residues long: A-factor-processing enzyme (1027 aa).

His118 is a Zn(2+) binding site. The active-site Proton acceptor is the Glu121. 2 residues coordinate Zn(2+): His122 and Glu199.

The protein belongs to the peptidase M16 family. Requires Zn(2+) as cofactor.

It is found in the membrane. Its activity is regulated as follows. Inhibited by chelating agents like EDTA, TPEN and 1,1-phenanthroline, as well as NEM, free cysteine and DTT. Involved in the N-terminal endoproteolytic cleavage of the P2 precursor of the a-factor mating pheromone. Capable of proteolysing the established mammalian insulin-degrading enzymes (IDEs) substrates amyloid-beta peptide and insulin B-chain. In Saccharomyces cerevisiae (strain ATCC 204508 / S288c) (Baker's yeast), this protein is A-factor-processing enzyme (STE23).